Consider the following 367-residue polypeptide: Beta sliding clamp (367 aa).

The protein belongs to the beta sliding clamp family. Forms a ring-shaped head-to-tail homodimer around DNA which binds and tethers DNA polymerases and other proteins to the DNA. The DNA replisome complex has a single clamp-loading complex (3 tau and 1 each of delta, delta', psi and chi subunits) which binds 3 Pol III cores (1 core on the leading strand and 2 on the lagging strand) each with a beta sliding clamp dimer. Additional proteins in the replisome are other copies of gamma, psi and chi, Ssb, DNA helicase and RNA primase.

It localises to the cytoplasm. In terms of biological role, confers DNA tethering and processivity to DNA polymerases and other proteins. Acts as a clamp, forming a ring around DNA (a reaction catalyzed by the clamp-loading complex) which diffuses in an ATP-independent manner freely and bidirectionally along dsDNA. Initially characterized for its ability to contact the catalytic subunit of DNA polymerase III (Pol III), a complex, multichain enzyme responsible for most of the replicative synthesis in bacteria; Pol III exhibits 3'-5' exonuclease proofreading activity. The beta chain is required for initiation of replication as well as for processivity of DNA replication. This is Beta sliding clamp (dnaN) from Pseudomonas putida (strain ATCC 47054 / DSM 6125 / CFBP 8728 / NCIMB 11950 / KT2440).